A 200-amino-acid polypeptide reads, in one-letter code: GTP-binding protein ypt2 (200 aa).

16-23 provides a ligand contact to GTP; the sequence is GDSGVGKS. The Effector region motif lies at 38–46; sequence FITTIGIDF. Residues 64 to 68 and 122 to 125 contribute to the GTP site; these read DTAGQ and NKCD. 2 S-geranylgeranyl cysteine lipidation sites follow: C199 and C200.

This sequence belongs to the small GTPase superfamily. Rab family.

Its subcellular location is the cell membrane. Its function is as follows. Protein transport. Probably involved in vesicular traffic. This is GTP-binding protein ypt2 (ypt2) from Schizosaccharomyces pombe (strain 972 / ATCC 24843) (Fission yeast).